A 180-amino-acid chain; its full sequence is tRNA (cytidine(56)-2'-O)-methyltransferase (180 aa).

S-adenosyl-L-methionine-binding positions include leucine 84 and 112-116 (GAEKV).

It belongs to the aTrm56 family. Homodimer.

The protein localises to the cytoplasm. It catalyses the reaction cytidine(56) in tRNA + S-adenosyl-L-methionine = 2'-O-methylcytidine(56) in tRNA + S-adenosyl-L-homocysteine + H(+). In terms of biological role, specifically catalyzes the AdoMet-dependent 2'-O-ribose methylation of cytidine at position 56 in tRNAs. The protein is tRNA (cytidine(56)-2'-O)-methyltransferase of Haloarcula marismortui (strain ATCC 43049 / DSM 3752 / JCM 8966 / VKM B-1809) (Halobacterium marismortui).